Consider the following 331-residue polypeptide: Putative phosphoribosylaminoimidazole-succinocarboxamide synthase (331 aa).

The protein belongs to the SAICAR synthetase family. Highly divergent.

The catalysed reaction is 5-amino-1-(5-phospho-D-ribosyl)imidazole-4-carboxylate + L-aspartate + ATP = (2S)-2-[5-amino-1-(5-phospho-beta-D-ribosyl)imidazole-4-carboxamido]succinate + ADP + phosphate + 2 H(+). The protein operates within purine metabolism; IMP biosynthesis via de novo pathway; 5-amino-1-(5-phospho-D-ribosyl)imidazole-4-carboxamide from 5-amino-1-(5-phospho-D-ribosyl)imidazole-4-carboxylate: step 1/2. The sequence is that of Putative phosphoribosylaminoimidazole-succinocarboxamide synthase (purC) from Archaeoglobus fulgidus (strain ATCC 49558 / DSM 4304 / JCM 9628 / NBRC 100126 / VC-16).